Reading from the N-terminus, the 123-residue chain is Small ribosomal subunit protein uS12 (123 aa).

A 3-methylthioaspartic acid modification is found at Asp89. Residues 103–123 (DTSGVQDRRQGRSKYGAKRPK) form a disordered region. Basic residues predominate over residues 113 to 123 (GRSKYGAKRPK).

This sequence belongs to the universal ribosomal protein uS12 family. As to quaternary structure, part of the 30S ribosomal subunit. Contacts proteins S8 and S17. May interact with IF1 in the 30S initiation complex.

Its function is as follows. With S4 and S5 plays an important role in translational accuracy. Interacts with and stabilizes bases of the 16S rRNA that are involved in tRNA selection in the A site and with the mRNA backbone. Located at the interface of the 30S and 50S subunits, it traverses the body of the 30S subunit contacting proteins on the other side and probably holding the rRNA structure together. The combined cluster of proteins S8, S12 and S17 appears to hold together the shoulder and platform of the 30S subunit. The polypeptide is Small ribosomal subunit protein uS12 (Nitratidesulfovibrio vulgaris (strain ATCC 29579 / DSM 644 / CCUG 34227 / NCIMB 8303 / VKM B-1760 / Hildenborough) (Desulfovibrio vulgaris)).